A 99-amino-acid polypeptide reads, in one-letter code: High mobility group nucleosome-binding domain-containing protein 3 (99 aa).

3 stretches are compositionally biased toward basic and acidic residues: residues 1–25 (MPKR…EPTR), 39–53 (PEPK…KEPG), and 62–72 (GKKEEKQEAGK). The interval 1–99 (MPKRKSPENT…KTESVDNEGE (99 aa)) is disordered. Ser-6 carries the post-translational modification Phosphoserine. Phosphothreonine is present on Thr-10. Residues Ser-78 and Ser-93 each carry the phosphoserine modification. A compositionally biased stretch (basic and acidic residues) spans 81–93 (GETKAEEAQKTES).

The protein belongs to the HMGN family. As to quaternary structure, interacts with the ligand binding domain of the thyroid receptor (TR) (in vitro). Requires the presence of thyroid hormone for its interaction. Interacts with transcriptional regulator SEHBP. Interacts with nucleosomes. In terms of tissue distribution, expressed in kidney, lung, pancreas, testis, skeletal muscle, heart, thyroid gland, pituitary gland, prostate and uterus. Low expression in liver, spleen, placenta and ovaries.

It localises to the nucleus. Functionally, binds to nucleosomes, regulating chromatin structure and consequently, chromatin-dependent processes such as transcription, DNA replication and DNA repair. Affects both insulin and glucagon levels and modulates the expression of pancreatic genes involved in insulin secretion. Regulates the expression of the glucose transporter SLC2A2 by binding specifically to its promoter region and recruiting PDX1 and additional transcription factors. Regulates the expression of SLC6A9, a glycine transporter which regulates the glycine concentration in synaptic junctions in the central nervous system, by binding to its transcription start site. May play a role in ocular development and astrocyte function. The sequence is that of High mobility group nucleosome-binding domain-containing protein 3 (HMGN3) from Homo sapiens (Human).